Consider the following 442-residue polypeptide: Prenyltransferase nscD (442 aa).

The protein belongs to the tryptophan dimethylallyltransferase family.

Its pathway is secondary metabolite biosynthesis. Its function is as follows. Prenyltransferase; part of the gene cluster that mediates the biosynthesis of neosartoricin B, a prenylated anthracenone that probably exhibits T-cell antiproliferative activity, suggestive of a physiological role as an immunosuppressive agent. The non-reducing polyketide synthase nscA probably synthesizes and cyclizes the decaketide backbone. The hydrolase nscB then mediates the product release through hydrolysis followed by spontaneous decarboxylation. The prenyltransferase nscD catalyzes the addition of the dimethylallyl group to the aromatic C5. The FAD-dependent monooxygenase nscC is then responsible for the stereospecific hydroxylation at C2. Neosartoricin B can be converted into two additional compounds neosartoricins C and D. Neosartoricin C is a spirocyclic compound that is cyclized through the attack of C3 hydroxyl on C14, followed by dehydration. On the other hand, neosartoricin D is a further cyclized compound in which attack of C2 on C14 in neosartoricin C results in the formation of the acetal-containing dioxabicyclo-octanone ring. Both of these compounds are novel and possibly represent related metabolites of the gene cluster. In Trichophyton verrucosum (strain HKI 0517), this protein is Prenyltransferase nscD.